A 245-amino-acid chain; its full sequence is 1-(5-phosphoribosyl)-5-[(5-phosphoribosylamino)methylideneamino] imidazole-4-carboxamide isomerase (245 aa).

The active-site Proton acceptor is the Asp8. Asp129 acts as the Proton donor in catalysis.

Belongs to the HisA/HisF family.

Its subcellular location is the cytoplasm. The catalysed reaction is 1-(5-phospho-beta-D-ribosyl)-5-[(5-phospho-beta-D-ribosylamino)methylideneamino]imidazole-4-carboxamide = 5-[(5-phospho-1-deoxy-D-ribulos-1-ylimino)methylamino]-1-(5-phospho-beta-D-ribosyl)imidazole-4-carboxamide. Its pathway is amino-acid biosynthesis; L-histidine biosynthesis; L-histidine from 5-phospho-alpha-D-ribose 1-diphosphate: step 4/9. The polypeptide is 1-(5-phosphoribosyl)-5-[(5-phosphoribosylamino)methylideneamino] imidazole-4-carboxamide isomerase (Heliobacterium modesticaldum (strain ATCC 51547 / Ice1)).